The chain runs to 529 residues: L-ornithine N(5)-monooxygenase (529 aa).

FAD is bound by residues 100–108 (EKQPQFAWH) and Gln-119. Lys-124 is a binding site for substrate. Residue Val-185 participates in FAD binding. An NADP(+)-binding site is contributed by 270–273 (NGQS). Substrate-binding positions include 309–312 (NEIF) and Asn-339. 339-341 (NYG) provides a ligand contact to NADP(+). 493–495 (TLL) lines the FAD pocket. Position 496 (Ser-496) interacts with substrate.

Belongs to the lysine N(6)-hydroxylase/L-ornithine N(5)-oxygenase family. Homotetramer. FAD is required as a cofactor.

The catalysed reaction is L-ornithine + NADPH + O2 = N(5)-hydroxy-L-ornithine + NADP(+) + H2O. The enzyme catalyses L-ornithine + NADH + O2 = N(5)-hydroxy-L-ornithine + NAD(+) + H2O. Its pathway is siderophore biosynthesis. Its function is as follows. L-ornithine N(5)-monooxygenase; part of the gene cluster that mediates the biosynthesis of hydroxamate-containing siderophores that play a critical role in virulence. Cochliobolus heterostrophus produces extracellular coprogen-type siderophores including coprogen, neocoprogen I and neocoprogen II, as well as the intracellular siderophore ferricrocin. The role of extracellular siderophores is to supply iron to their producers in planta and the intracellular ferricrocin is required for intracellular iron distribution and storage with a crucial role in ascus and ascospore development. SIDA2 catalyzes the conversion of L-ornithine to N(5)-hydroxyornithine, the first step in the biosynthesis of all hydroxamate-containing siderophores. The assembly of extracellular coprogen-type siderophores is then performed by the nonribosomal peptide synthetase (NRPS) NPS6 whereas the intracellular siderophore ferricrocin is assembled by NPS2. This chain is L-ornithine N(5)-monooxygenase, found in Cochliobolus heterostrophus (strain C4 / ATCC 48331 / race T) (Southern corn leaf blight fungus).